Reading from the N-terminus, the 344-residue chain is Outer membrane protein B (344 aa).

Residues 1–30 form the signal peptide; that stretch reads MNSKMLKHLRLATLSFSMFFGIVSSPAVYA.

Belongs to the chlamydial OMP family.

It is found in the cell outer membrane. The protein is Outer membrane protein B (ompB) of Chlamydia pneumoniae (Chlamydophila pneumoniae).